The primary structure comprises 189 residues: Crossover junction endodeoxyribonuclease RuvC (189 aa).

Catalysis depends on residues Asp8, Glu67, and Asp139. The Mg(2+) site is built by Asp8, Glu67, and Asp139.

The protein belongs to the RuvC family. In terms of assembly, homodimer which binds Holliday junction (HJ) DNA. The HJ becomes 2-fold symmetrical on binding to RuvC with unstacked arms; it has a different conformation from HJ DNA in complex with RuvA. In the full resolvosome a probable DNA-RuvA(4)-RuvB(12)-RuvC(2) complex forms which resolves the HJ. Mg(2+) serves as cofactor.

It is found in the cytoplasm. The catalysed reaction is Endonucleolytic cleavage at a junction such as a reciprocal single-stranded crossover between two homologous DNA duplexes (Holliday junction).. Functionally, the RuvA-RuvB-RuvC complex processes Holliday junction (HJ) DNA during genetic recombination and DNA repair. Endonuclease that resolves HJ intermediates. Cleaves cruciform DNA by making single-stranded nicks across the HJ at symmetrical positions within the homologous arms, yielding a 5'-phosphate and a 3'-hydroxyl group; requires a central core of homology in the junction. The consensus cleavage sequence is 5'-(A/T)TT(C/G)-3'. Cleavage occurs on the 3'-side of the TT dinucleotide at the point of strand exchange. HJ branch migration catalyzed by RuvA-RuvB allows RuvC to scan DNA until it finds its consensus sequence, where it cleaves and resolves the cruciform DNA. In Histophilus somni (strain 129Pt) (Haemophilus somnus), this protein is Crossover junction endodeoxyribonuclease RuvC.